A 314-amino-acid chain; its full sequence is 4-hydroxy-3-methylbut-2-enyl diphosphate reductase (314 aa).

A [4Fe-4S] cluster-binding site is contributed by cysteine 12. Histidine 41 and histidine 74 together coordinate (2E)-4-hydroxy-3-methylbut-2-enyl diphosphate. 2 residues coordinate dimethylallyl diphosphate: histidine 41 and histidine 74. Residues histidine 41 and histidine 74 each contribute to the isopentenyl diphosphate site. Residue cysteine 96 coordinates [4Fe-4S] cluster. Residue histidine 124 coordinates (2E)-4-hydroxy-3-methylbut-2-enyl diphosphate. Histidine 124 contacts dimethylallyl diphosphate. Histidine 124 contributes to the isopentenyl diphosphate binding site. Glutamate 126 functions as the Proton donor in the catalytic mechanism. A (2E)-4-hydroxy-3-methylbut-2-enyl diphosphate-binding site is contributed by threonine 167. Cysteine 197 contacts [4Fe-4S] cluster. (2E)-4-hydroxy-3-methylbut-2-enyl diphosphate contacts are provided by serine 225, serine 226, asparagine 227, and serine 269. Serine 225, serine 226, asparagine 227, and serine 269 together coordinate dimethylallyl diphosphate. The isopentenyl diphosphate site is built by serine 225, serine 226, asparagine 227, and serine 269.

Belongs to the IspH family. [4Fe-4S] cluster is required as a cofactor.

The enzyme catalyses isopentenyl diphosphate + 2 oxidized [2Fe-2S]-[ferredoxin] + H2O = (2E)-4-hydroxy-3-methylbut-2-enyl diphosphate + 2 reduced [2Fe-2S]-[ferredoxin] + 2 H(+). The catalysed reaction is dimethylallyl diphosphate + 2 oxidized [2Fe-2S]-[ferredoxin] + H2O = (2E)-4-hydroxy-3-methylbut-2-enyl diphosphate + 2 reduced [2Fe-2S]-[ferredoxin] + 2 H(+). It participates in isoprenoid biosynthesis; dimethylallyl diphosphate biosynthesis; dimethylallyl diphosphate from (2E)-4-hydroxy-3-methylbutenyl diphosphate: step 1/1. It functions in the pathway isoprenoid biosynthesis; isopentenyl diphosphate biosynthesis via DXP pathway; isopentenyl diphosphate from 1-deoxy-D-xylulose 5-phosphate: step 6/6. Its function is as follows. Catalyzes the conversion of 1-hydroxy-2-methyl-2-(E)-butenyl 4-diphosphate (HMBPP) into a mixture of isopentenyl diphosphate (IPP) and dimethylallyl diphosphate (DMAPP). Acts in the terminal step of the DOXP/MEP pathway for isoprenoid precursor biosynthesis. The polypeptide is 4-hydroxy-3-methylbut-2-enyl diphosphate reductase (Pseudoalteromonas atlantica (strain T6c / ATCC BAA-1087)).